Consider the following 425-residue polypeptide: tRNA(Ile)-lysidine synthase (425 aa).

27–32 (SGGLDS) contacts ATP.

This sequence belongs to the tRNA(Ile)-lysidine synthase family.

Its subcellular location is the cytoplasm. It catalyses the reaction cytidine(34) in tRNA(Ile2) + L-lysine + ATP = lysidine(34) in tRNA(Ile2) + AMP + diphosphate + H(+). Its function is as follows. Ligates lysine onto the cytidine present at position 34 of the AUA codon-specific tRNA(Ile) that contains the anticodon CAU, in an ATP-dependent manner. Cytidine is converted to lysidine, thus changing the amino acid specificity of the tRNA from methionine to isoleucine. The chain is tRNA(Ile)-lysidine synthase from Streptococcus pneumoniae (strain P1031).